Reading from the N-terminus, the 901-residue chain is Protein SOK1 (901 aa).

Disordered stretches follow at residues 1 to 87 (MDQP…QNII), 106 to 139 (RSSGVITPSMSLNASTNATNNDSSGNSANSSDLK), and 162 to 231 (NDDN…NASN). A compositionally biased stretch (low complexity) spans 10–51 (PTTASNPAPSSTNSSSAPSATNSKQERSSSSLSKPSSVVPSK). Phosphoserine is present on residues Ser-40 and Ser-53. 2 stretches are compositionally biased toward polar residues: residues 74-87 (GDTSTLDGSSQNII) and 106-115 (RSSGVITPSM). The segment covering 116–138 (SLNASTNATNNDSSGNSANSSDL) has biased composition (low complexity). 2 positions are modified to phosphoserine: Ser-191 and Ser-193. A compositionally biased stretch (polar residues) spans 220-231 (AAQQQPPGNASN). Residue Ser-245 is modified to Phosphoserine.

This sequence belongs to the TCP11 family.

Its subcellular location is the nucleus. In terms of biological role, high copy suppressor of a cyclic AMP-dependent protein kinase mutant. The sequence is that of Protein SOK1 (SOK1) from Saccharomyces cerevisiae (strain ATCC 204508 / S288c) (Baker's yeast).